The following is a 324-amino-acid chain: HLLNVKIGMTFSGGVIDFLLFGVLPNRTAWWLVIPVGLVFAVIYYFGFRFAIRKWDLATPGREKTVEEAPKAEAAAAGDLPYEVLAALGGKENIEHLDACITRLRVSVHDIGRVDKDRLKALGAAGVLEVGNNVQAIFGPKSDMLKGQIQDIMQGKAPARAEEKPKTAASEAAESETIASPMSGEIVPLAEVPDQVFSQKMMGDGFAVMPTDGTVVSPVDGKIINVFPTKHAIGIQSAGGHEILIHVGIDTVKLNGQGFEALVKEGDEVKKGQPILRVDLDYVKQNAPSIVTPVIFTNLQAGETVHVNKQGPVARGEDAVVTIR.

Residues 1–63 enclose the PTS EIIC type-1 domain; it reads HLLNVKIGMT…KWDLATPGRE (63 aa). 2 helical membrane passes run 5-25 and 28-48; these read VKIG…GVLP and TAWW…YFGF. The PTS EIIB type-1 domain maps to 78-159; that stretch reads GDLPYEVLAA…QDIMQGKAPA (82 aa). C100 (phosphocysteine intermediate; for EIIB activity) is an active-site residue. Positions 156-177 are disordered; the sequence is KAPARAEEKPKTAASEAAESET. The segment covering 167 to 177 has biased composition (low complexity); the sequence is TAASEAAESET. Residues 194–298 form the PTS EIIA type-1 domain; that stretch reads DQVFSQKMMG…SIVTPVIFTN (105 aa). Residue H246 is the Tele-phosphohistidine intermediate; for EIIA activity of the active site.

It is found in the cell membrane. It carries out the reaction N(pros)-phospho-L-histidyl-[protein] + D-glucose(out) = D-glucose 6-phosphate(in) + L-histidyl-[protein]. Its function is as follows. The phosphoenolpyruvate-dependent sugar phosphotransferase system (sugar PTS), a major carbohydrate active transport system, catalyzes the phosphorylation of incoming sugar substrates concomitantly with their translocation across the cell membrane. This system is involved in glucose transport. This is PTS system glucose-specific EIICBA component (ptsG) from Geobacillus stearothermophilus (Bacillus stearothermophilus).